Consider the following 583-residue polypeptide: Transmembrane protein 108 (583 aa).

The helical transmembrane segment at 7-27 threads the bilayer; sequence ALYCQLLSFLLTLALTEALVF. Residues 31–176 form an interacts with SH3GL2 region; that stretch reads EPSPRESLQV…ATIRRPPRPP (146 aa). Disordered regions lie at residues 71-360 and 376-404; these read VTPT…GVFA and VPSE…STVS. 2 stretches are compositionally biased toward polar residues: residues 80–93 and 100–122; these read PSSQ…TTTP and PTNT…SLST. Residues 177 to 187 show a composition bias toward low complexity; sequence GSSRKGAGSSP. Residues 180–413 form an interacts with DST (isoform 1) region; the sequence is RKGAGSSPRP…SQAEEKAVAT (234 aa). Polar residues-rich tracts occupy residues 251 to 273, 310 to 319, and 333 to 357; these read YSSS…SWVP, ASGTPASQQR, and DGSS…TNSG. The chain crosses the membrane as a helical span at residues 477–497; it reads IAWVILAISVPISSCSVLLTV. Residues 498–583 are interaction with CYFIP2; it reads CCLRRKKKPA…FVGNDQVSEI (86 aa).

As to quaternary structure, interacts with DST (isoform 1). Interacts with SH3GL2. Interacts (via N-terminus) with CYFIP1 and CYFIP2; the interactions associate TMEM108 with the WAVE1 complex. In terms of processing, glycosylated.

The protein resides in the membrane. It localises to the postsynaptic density. The protein localises to the endosome membrane. Its subcellular location is the cell projection. It is found in the axon. The protein resides in the dendrite. It localises to the early endosome. Transmembrane protein required for proper cognitive functions. Involved in the development of dentate gyrus (DG) neuron circuitry, is necessary for AMPA receptors surface expression and proper excitatory postsynaptic currents of DG granule neurons. Regulates the organization and stability of the microtubule network of sensory neurons to allow axonal transport. Through the interaction with DST, mediates the docking of the dynein/dynactin motor complex to vesicle cargos for retrograde axonal transport. In hippocampal neurons, required for BDNF-dependent dendrite outgrowth. Cooperates with SH3GL2 and recruits the WAVE1 complex to facilitate actin-dependent BDNF:NTRK2 early endocytic trafficking and mediate signaling from early endosomes. This Bos taurus (Bovine) protein is Transmembrane protein 108.